Consider the following 398-residue polypeptide: ATP-dependent RNA helicase RhlB (398 aa).

Positions 9–37 (TRFHDFKLSNELMHAIHDLGFPYCTPIQA) match the Q motif motif. Positions 40-220 (LGYTLRGQDA…KQWTTNPAIV (181 aa)) constitute a Helicase ATP-binding domain. 53–60 (AQTGTGKT) lines the ATP pocket. Residues 166–169 (DEAD) carry the DEAD box motif. Residues 243–393 (DKYKLLYNLV…MPPDELLKPV (151 aa)) enclose the Helicase C-terminal domain.

This sequence belongs to the DEAD box helicase family. RhlB subfamily. In terms of assembly, component of the RNA degradosome, which is a multiprotein complex involved in RNA processing and mRNA degradation.

The protein resides in the cytoplasm. It carries out the reaction ATP + H2O = ADP + phosphate + H(+). Its function is as follows. DEAD-box RNA helicase involved in RNA degradation. Has RNA-dependent ATPase activity and unwinds double-stranded RNA. The sequence is that of ATP-dependent RNA helicase RhlB from Pseudomonas putida (strain ATCC 47054 / DSM 6125 / CFBP 8728 / NCIMB 11950 / KT2440).